Reading from the N-terminus, the 521-residue chain is Apolipoprotein N-acyltransferase (521 aa).

6 helical membrane passes run 34-54 (LAAPPTGWGVLVWVALVPLLV), 64-84 (AFWLGTLAGMVYYAILLRWLL), 100-120 (LAIALGAWLFVSASQAWVIGL), 137-157 (LFAVGLWVGLHWLWGQGETAF), 176-196 (VALGGAQLLVGLAVAVNALVA), and 206-226 (YAGLAALLAASVYLYGWWQLA). Residues 240-480 (IQGNIAQARK…YAAFVEPVRL (241 aa)) form the CN hydrolase domain. Catalysis depends on Glu-281, which acts as the Proton acceptor. Lys-341 is a catalytic residue. The Nucleophile role is filled by Cys-392. A helical transmembrane segment spans residues 488 to 508 (ALWGDWFVPLSAALALLGLIA).

It belongs to the CN hydrolase family. Apolipoprotein N-acyltransferase subfamily.

It localises to the cell inner membrane. The enzyme catalyses N-terminal S-1,2-diacyl-sn-glyceryl-L-cysteinyl-[lipoprotein] + a glycerophospholipid = N-acyl-S-1,2-diacyl-sn-glyceryl-L-cysteinyl-[lipoprotein] + a 2-acyl-sn-glycero-3-phospholipid + H(+). The protein operates within protein modification; lipoprotein biosynthesis (N-acyl transfer). Catalyzes the phospholipid dependent N-acylation of the N-terminal cysteine of apolipoprotein, the last step in lipoprotein maturation. The sequence is that of Apolipoprotein N-acyltransferase from Gloeobacter violaceus (strain ATCC 29082 / PCC 7421).